Reading from the N-terminus, the 355-residue chain is Phosphoserine aminotransferase (355 aa).

An L-glutamate-binding site is contributed by arginine 41. Pyridoxal 5'-phosphate contacts are provided by residues 75 to 76, tryptophan 99, threonine 147, aspartate 166, and glutamine 189; that span reads AS. Lysine 190 is subject to N6-(pyridoxal phosphate)lysine. Residue 231–232 participates in pyridoxal 5'-phosphate binding; it reads NT.

The protein belongs to the class-V pyridoxal-phosphate-dependent aminotransferase family. SerC subfamily. Homodimer. Pyridoxal 5'-phosphate is required as a cofactor.

It is found in the cytoplasm. The enzyme catalyses O-phospho-L-serine + 2-oxoglutarate = 3-phosphooxypyruvate + L-glutamate. It carries out the reaction 4-(phosphooxy)-L-threonine + 2-oxoglutarate = (R)-3-hydroxy-2-oxo-4-phosphooxybutanoate + L-glutamate. Its pathway is amino-acid biosynthesis; L-serine biosynthesis; L-serine from 3-phospho-D-glycerate: step 2/3. It functions in the pathway cofactor biosynthesis; pyridoxine 5'-phosphate biosynthesis; pyridoxine 5'-phosphate from D-erythrose 4-phosphate: step 3/5. Its function is as follows. Catalyzes the reversible conversion of 3-phosphohydroxypyruvate to phosphoserine and of 3-hydroxy-2-oxo-4-phosphonooxybutanoate to phosphohydroxythreonine. The chain is Phosphoserine aminotransferase from Bacteroides fragilis (strain ATCC 25285 / DSM 2151 / CCUG 4856 / JCM 11019 / LMG 10263 / NCTC 9343 / Onslow / VPI 2553 / EN-2).